The following is a 437-amino-acid chain: Adenylosuccinate synthetase (437 aa).

GTP contacts are provided by residues 12–18 (GDEGKGK) and 40–42 (GHT). D13 (proton acceptor) is an active-site residue. 2 residues coordinate Mg(2+): D13 and G40. IMP-binding positions include 13–16 (DEGK), 38–41 (NAGH), T128, R142, Q223, T238, and R302. H41 (proton donor) is an active-site residue. 298–304 (TTTGRRR) is a binding site for substrate. Residues R304, 330–332 (KLD), and 412–414 (SLG) each bind GTP.

The protein belongs to the adenylosuccinate synthetase family. In terms of assembly, homodimer. The cofactor is Mg(2+).

It is found in the cytoplasm. It catalyses the reaction IMP + L-aspartate + GTP = N(6)-(1,2-dicarboxyethyl)-AMP + GDP + phosphate + 2 H(+). It participates in purine metabolism; AMP biosynthesis via de novo pathway; AMP from IMP: step 1/2. Functionally, plays an important role in the de novo pathway of purine nucleotide biosynthesis. Catalyzes the first committed step in the biosynthesis of AMP from IMP. The sequence is that of Adenylosuccinate synthetase from Prochlorococcus marinus (strain NATL1A).